We begin with the raw amino-acid sequence, 213 residues long: Kynurenine formamidase (213 aa).

Trp-18 contacts substrate. Zn(2+)-binding residues include His-48, His-52, and Asp-54. His-58 acts as the Proton donor/acceptor in catalysis. Residues His-160 and Glu-172 each contribute to the Zn(2+) site.

This sequence belongs to the Cyclase 1 superfamily. KynB family. As to quaternary structure, homodimer. Requires Zn(2+) as cofactor.

The catalysed reaction is N-formyl-L-kynurenine + H2O = L-kynurenine + formate + H(+). The protein operates within amino-acid degradation; L-tryptophan degradation via kynurenine pathway; L-kynurenine from L-tryptophan: step 2/2. Catalyzes the hydrolysis of N-formyl-L-kynurenine to L-kynurenine, the second step in the kynurenine pathway of tryptophan degradation. In Burkholderia vietnamiensis (strain G4 / LMG 22486) (Burkholderia cepacia (strain R1808)), this protein is Kynurenine formamidase.